A 5251-amino-acid chain; its full sequence is Dynein heavy chain-like protein 2 (5251 aa).

5 Kelch repeats span residues 37–87 (GLFL…CYHN), 95–143 (YVII…LQNG), 266–317 (SLIL…IHGN), 318–367 (NLFI…LVES), and 372–421 (IIFI…QNNE). Positions 140 to 188 (LQNGINGTNEKGYISQTDDENCSDNKYGENQDYGSNDSDSKDGEDIDKD) are disordered. Positions 686–732 (NNIEQRNNNNDNNDNNNNDNNNNNNNDNNNNNNNNNNNNNNNNDNLN) are disordered. The segment covering 692–730 (NNNNDNNDNNNNDNNNNNNNDNNNNNNNNNNNNNNNNDN) has biased composition (low complexity). 2 coiled-coil regions span residues 1155–1225 (DNII…KKIK) and 1544–1610 (KLNN…KLIS). Positions 1554–1598 (EKNKNANENSNEIETNKYNKKEELTNNRDGDGDDDDNIKNDKDEK) are disordered. Positions 1567 to 1583 (ETNKYNKKEELTNNRDG) are enriched in basic and acidic residues. One copy of the Kelch 6 repeat lies at 1639 to 1685 (HIKYTLKYYITNLFRLKDLFNNEKEKWIDENYLAQVFILCNTIFFVN). The tract at residues 1802-1825 (HQEGKQEYNNKNNDNDNNNNNNNN) is disordered. The span at 1810-1825 (NNKNNDNDNNNNNNNN) shows a compositional bias: low complexity. 1895–1902 (GPAGTGKT) is a binding site for ATP. The stretch at 2136–2188 (NDINENKKEKDNIEELKSDNVKEEKKTKKKHLEDNNNNKKKELFNLNNIEKEL) forms a coiled coil. The tract at residues 2152-2171 (KSDNVKEEKKTKKKHLEDNN) is disordered. 2224–2231 (GEAGCGKT) contributes to the ATP binding site. The stretch at 2447 to 2494 (VIWCFGGFLGEKDNVNYKKSFDKYWKNTFKSIKVNRKISVFDFYVENN) is one Kelch 7 repeat. Residues 2546-2553 (GKTGVGKT) and 2890-2897 (GIGGCGKT) each bind ATP. Composition is skewed to low complexity over residues 3138–3154 (DNNNNNNNNRDNIDGNN) and 3652–3671 (DQNFINNNNNNNSSNNNSTN). 6 disordered regions span residues 3138 to 3163 (DNNNNNNNNRDNIDGNNFFKNREGND), 3652 to 3686 (DQNFINNNNNNNSSNNNSTNFGYNEDPQKKDNHNN), 4042 to 4250 (EDND…EENV), 4280 to 4299 (NGKIDKDKEDDLEEEEDFEN), 4773 to 4824 (MDFH…ENEE), and 4910 to 4948 (KIIKKEKPGDNKDNKYTHDQKKETIHKEEDDEDEKHSGS). A compositionally biased stretch (acidic residues) spans 4059 to 4086 (KMEDEEKMEEEKVDEEKMEEEKVDEEKM). Basic and acidic residues predominate over residues 4087–4247 (EDEKVEEKME…EKGEEQKAEE (161 aa)). Acidic residues-rich tracts occupy residues 4289–4299 (DDLEEEEDFEN) and 4807–4823 (DDDDESNNSNDNEEENE). The span at 4912–4937 (IKKEKPGDNKDNKYTHDQKKETIHKE) shows a compositional bias: basic and acidic residues.

This sequence belongs to the dynein heavy chain family. In terms of assembly, consists of at least two heavy chains and a number of intermediate and light chains.

Its subcellular location is the cytoplasm. It localises to the cytoskeleton. Acts as a motor for the intracellular retrograde motility of vesicles and organelles along microtubules. Dynein has ATPase activity; the force-producing power stroke is thought to occur on release of ADP. In Plasmodium falciparum (isolate 3D7), this protein is Dynein heavy chain-like protein 2.